The primary structure comprises 545 residues: Chaperonin GroEL (545 aa).

ATP contacts are provided by residues 30–33 (TLGP), Lys51, 87–91 (DGTTT), Gly415, and Asp495.

This sequence belongs to the chaperonin (HSP60) family. Forms a cylinder of 14 subunits composed of two heptameric rings stacked back-to-back. Interacts with the co-chaperonin GroES.

Its subcellular location is the cytoplasm. The enzyme catalyses ATP + H2O + a folded polypeptide = ADP + phosphate + an unfolded polypeptide.. Together with its co-chaperonin GroES, plays an essential role in assisting protein folding. The GroEL-GroES system forms a nano-cage that allows encapsulation of the non-native substrate proteins and provides a physical environment optimized to promote and accelerate protein folding. This is Chaperonin GroEL from Shewanella sp. (strain W3-18-1).